We begin with the raw amino-acid sequence, 682 residues long: Protein asunder (682 aa).

The stretch at Asn517–Glu570 forms a coiled coil. Polar residues predominate over residues Pro571–Pro583. A disordered region spans residues Pro571–Arg612. A Nuclear localization signal (NLS) motif is present at residues Leu606–Arg612.

This sequence belongs to the Integrator subunit 13 family. Belongs to the multiprotein complex Integrator, at least composed of IntS1, IntS2, IntS3, IntS4, omd/IntS5, IntS6, defl/IntS7, IntS8, IntS9, IntS10, IntS11, IntS12, asun/IntS13, IntS14 and IntS15. The core complex associates with protein phosphatase 2A subunits mts/PP2A and Pp2A-29B, to form the Integrator-PP2A (INTAC) complex. In terms of processing, phosphorylated.

The protein localises to the nucleus. Its subcellular location is the cytoplasm. The protein resides in the perinuclear region. Its function is as follows. Component of the integrator complex, a multiprotein complex that terminates RNA polymerase II (Pol II) transcription in the promoter-proximal region of genes. The integrator complex provides a quality checkpoint during transcription elongation by driving premature transcription termination of transcripts that are unfavorably configured for transcriptional elongation: the complex terminates transcription by (1) catalyzing dephosphorylation of the C-terminal domain (CTD) of Pol II subunit Polr2A/Rbp1 and Spt5, and (2) degrading the exiting nascent RNA transcript via endonuclease activity. The integrator complex is also involved in the 3'-end processing of the U7 snRNA, and also the spliceosomal snRNAs U1, U2, U4 and U5. This chain is Protein asunder (asun), found in Drosophila ananassae (Fruit fly).